We begin with the raw amino-acid sequence, 153 residues long: MESTTRTIAARKHIALVAHDHCKQSLLDWVETNKAPLSEHVLYATGTTGNLMQLKTDLPVNSMLSGPMGGDQQVGTLISEGKIDMMIFFWDPLNAVPHDPDVKALLRLVTVWNILVATDRSTADFLISSPLFHQEVAIVIPDYQRYLAERLPS.

The MGS-like domain maps to 6-153 (RTIAARKHIA…QRYLAERLPS (148 aa)). Residues histidine 19, lysine 23, 45 to 48 (TGTT), and 65 to 66 (SG) each bind substrate. Catalysis depends on aspartate 71, which acts as the Proton donor/acceptor. Histidine 98 is a binding site for substrate.

This sequence belongs to the methylglyoxal synthase family.

The enzyme catalyses dihydroxyacetone phosphate = methylglyoxal + phosphate. Catalyzes the formation of methylglyoxal from dihydroxyacetone phosphate. This is Methylglyoxal synthase from Sodalis glossinidius (strain morsitans).